A 523-amino-acid polypeptide reads, in one-letter code: MNEKQRLEQTGQIQTASHPADRKSDLERLKAKTTKDYEKYFTSVFLPPNLKEAKKRGKEEVQYVKDFTIPDEFRGMGRGRKFYIRTYGCQMNEHDTEVMAGIFMALGYEPTDRPEDANVILLNTCAIRENAENKVFGELGYLKPLKTTNPDLLLGVCGCMSQEEAVVNKILKQYQYVDLIFGTHNIHRLPYILHEAYMSKEMVVEVWSKEGDVVENLPKVRKGNIKAWVNIMYGCDKFCTYCIVPYTRGKERSRRPEDIIQEVRQLAAQGYKEITLLGQNVNAYGKDFNDIQYGLGDLMDELRKIDIARIRFTTSHPRDFDDRLIEVLAKRGNLVEHIHLPVQSGSTEILKMMGRKYTREEYLELVRKIKAAIPDVALTTDIIVGFPNETDEQFEETLSLYREVEFDSAYTFIYSPREGTPAAKMNDNVPMEVKKERLQRLNALVQEIAAKKMKQYEGQVVEVLVEGESKTNPDVLAGYTRKNKLVHFVGPKSLIGQLVNVRITQAKTWTLTGELANEAIEVN.

A disordered region spans residues 1-26; sequence MNEKQRLEQTGQIQTASHPADRKSDL. The span at 8–17 shows a compositional bias: polar residues; that stretch reads EQTGQIQTAS. In terms of domain architecture, MTTase N-terminal spans 80–198; the sequence is RKFYIRTYGC…LPYILHEAYM (119 aa). Positions 89, 125, 159, 235, 239, and 242 each coordinate [4Fe-4S] cluster. Residues 221–451 enclose the Radical SAM core domain; it reads RKGNIKAWVN…NALVQEIAAK (231 aa). The TRAM domain occupies 454–517; the sequence is KQYEGQVVEV…TWTLTGELAN (64 aa).

Belongs to the methylthiotransferase family. MiaB subfamily. In terms of assembly, monomer. Requires [4Fe-4S] cluster as cofactor.

It is found in the cytoplasm. It carries out the reaction N(6)-dimethylallyladenosine(37) in tRNA + (sulfur carrier)-SH + AH2 + 2 S-adenosyl-L-methionine = 2-methylsulfanyl-N(6)-dimethylallyladenosine(37) in tRNA + (sulfur carrier)-H + 5'-deoxyadenosine + L-methionine + A + S-adenosyl-L-homocysteine + 2 H(+). Functionally, catalyzes the methylthiolation of N6-(dimethylallyl)adenosine (i(6)A), leading to the formation of 2-methylthio-N6-(dimethylallyl)adenosine (ms(2)i(6)A) at position 37 in tRNAs that read codons beginning with uridine. The protein is tRNA-2-methylthio-N(6)-dimethylallyladenosine synthase of Geobacillus thermodenitrificans (strain NG80-2).